Here is a 92-residue protein sequence, read N- to C-terminus: uncharacterized protein (92 aa).

2 helical membrane passes run 34–54 (GLGI…FMFG) and 65–85 (LLYI…ASTV).

The protein localises to the cell membrane. This is an uncharacterized protein from Bacillus anthracis.